We begin with the raw amino-acid sequence, 331 residues long: Biotin synthase (331 aa).

The region spanning 43–267 (NTVQVSTLLS…LMPASYVRLS (225 aa)) is the Radical SAM core domain. Residues cysteine 58, cysteine 62, and cysteine 65 each coordinate [4Fe-4S] cluster. [2Fe-2S] cluster-binding residues include cysteine 102, cysteine 133, cysteine 193, and arginine 265.

This sequence belongs to the radical SAM superfamily. Biotin synthase family. As to quaternary structure, homodimer. Requires [4Fe-4S] cluster as cofactor. It depends on [2Fe-2S] cluster as a cofactor.

It catalyses the reaction (4R,5S)-dethiobiotin + (sulfur carrier)-SH + 2 reduced [2Fe-2S]-[ferredoxin] + 2 S-adenosyl-L-methionine = (sulfur carrier)-H + biotin + 2 5'-deoxyadenosine + 2 L-methionine + 2 oxidized [2Fe-2S]-[ferredoxin]. It functions in the pathway cofactor biosynthesis; biotin biosynthesis; biotin from 7,8-diaminononanoate: step 2/2. Catalyzes the conversion of dethiobiotin (DTB) to biotin by the insertion of a sulfur atom into dethiobiotin via a radical-based mechanism. In Alkalilimnicola ehrlichii (strain ATCC BAA-1101 / DSM 17681 / MLHE-1), this protein is Biotin synthase.